Consider the following 100-residue polypeptide: Small ribosomal subunit protein uS14c (100 aa).

The interval 1-31 (MARKSLIQREKKRQKLEQKYHSIRRSSKKEI) is disordered.

Belongs to the universal ribosomal protein uS14 family. As to quaternary structure, part of the 30S ribosomal subunit.

The protein resides in the plastid. The protein localises to the chloroplast. Binds 16S rRNA, required for the assembly of 30S particles. This chain is Small ribosomal subunit protein uS14c, found in Solanum bulbocastanum (Wild potato).